The chain runs to 477 residues: E3 ubiquitin-protein ligase TRIM17 (477 aa).

The RING-type zinc-finger motif lies at 16–66 (CSICLDYFTDPVMTACGHNFCRECIQMSWEKGKGKKGKKKQKGSFPCPECR). The B box-type zinc-finger motif lies at 94–135 (HKRDLCQIHQEPLKLFCQDDQTPICVVCREAQEHRMHRVLPL). Residues Cys99, His102, Cys121, and His127 each coordinate Zn(2+). Residues 135 to 225 (LDEAAREYKL…GKLQDSKASL (91 aa)) adopt a coiled-coil conformation. Residues 276–475 (AIKTVCRVPG…MVISTVTMWV (200 aa)) enclose the B30.2/SPRY domain.

It belongs to the TRIM/RBCC family. In terms of assembly, interacts (via coiled coil) with TRIM44 (via coiled coil). Interacts with TRIM28; this interaction prevents TRIM28 activity on BCL2A1. Interacts with TRIM41; this interaction prevents TRIM41 activity on ZSCAN2. Interacts with BECN1. Interacts with NFATC3 and NFATC4; these interactions prevent NFATC3 and NFATC4 nuclear localization. In terms of processing, auto-ubiquitinated. In terms of tissue distribution, expressed almost exclusively in the testis.

It is found in the cytoplasm. The protein localises to the lysosome. The enzyme catalyses S-ubiquitinyl-[E2 ubiquitin-conjugating enzyme]-L-cysteine + [acceptor protein]-L-lysine = [E2 ubiquitin-conjugating enzyme]-L-cysteine + N(6)-ubiquitinyl-[acceptor protein]-L-lysine.. It participates in protein modification; protein ubiquitination. E3 ubiquitin ligase that plays important roles in the regulation of neuronal apoptosis, selective autophagy or cell proliferation. Stimulates the degradation of kinetochore ZW10 interacting protein ZWINT in a proteasome-dependent manner, leading to negative regulation of cell proliferation. Inhibits autophagic degradation of diverse known targets while contributing to autophagy of midbodies. Autophagy-inhibitory activity involves MCL1, which TRIM17 assembles into complexes with the key autophagy regulator BECN1. Controls neuronal apoptosis by mediating ubiquitination and degradation of MCL1 to initiate neuronal death. In addition, regulates NFAT transcription factors NFATC3 and NFATC4 activities by preventing their nuclear localization, thus inhibiting their transcriptional activities. Decreases TRIM41-mediated degradation of ZSCAN2 thereby stimulating alpha-synuclein/SNCA transcription in neuronal cells. Prevents the E3 ubiquitin-ligase activity of TRIM28 and its interaction with anti-apoptotic BCL2A1, blocking TRIM28 from ubiquitinating BCL2A1. This chain is E3 ubiquitin-protein ligase TRIM17 (Trim17), found in Rattus norvegicus (Rat).